Reading from the N-terminus, the 422-residue chain is Ubiquitin-conjugating enzyme E2 Q1 (422 aa).

Met1 is subject to N-acetylmethionine. Residues 1-24 (MQQPQPQGQQQPGPGQQLGVQGAA) show a composition bias toward low complexity. 2 disordered regions span residues 1 to 40 (MQQPQPQGQQQPGPGQQLGVQGAAPGAGGGPGGGPGPGPC) and 173 to 221 (QPLP…EDDG). Residues 25–35 (PGAGGGPGGGP) are compositionally biased toward gly residues. Positions 185-200 (VSSEDEDEEMPEDTED) are enriched in acidic residues. A compositionally biased stretch (basic and acidic residues) spans 212–221 (AEGKKSEDDG). One can recognise a UBC core domain in the interval 251-415 (QATDRLMKEL…VQIHEKNGWY (165 aa)). Cys351 acts as the Glycyl thioester intermediate in catalysis.

Belongs to the ubiquitin-conjugating enzyme family. As to quaternary structure, monomer and homodimer. Only the homodimer is linked to ubiquitin through thiolester activation. Interacts (via N-terminus) with B4GALT1 (via N-terminal cytoplasmic domain); the interaction is direct. Post-translationally, autoubiquitinated in vitro in the presence of NEDD4L. Expressed in liver, brain, heart, spleen, lung, kidney, muscle, ovary, epididymis, testis and placenta. Also expressed in thymus and ES cells. Only expressed in the uterus during pregnancy. Expressed in oocytes and during subsequent embryonic development stages (4-cell stage, blastocyst, 8.5 dpc, 13.5 dpc, 16.5 dpc and 18.5 dpc).

Its subcellular location is the nucleus. The protein resides in the cell projection. The protein localises to the filopodium. It localises to the cytoplasm. It is found in the cytosol. It catalyses the reaction S-ubiquitinyl-[E1 ubiquitin-activating enzyme]-L-cysteine + [E2 ubiquitin-conjugating enzyme]-L-cysteine = [E1 ubiquitin-activating enzyme]-L-cysteine + S-ubiquitinyl-[E2 ubiquitin-conjugating enzyme]-L-cysteine.. It functions in the pathway protein modification; protein ubiquitination. Catalyzes the covalent attachment of ubiquitin to other proteins. Involved in female fertility and embryo implantation. May be involved in hormonal homeostasis in females. Involved in regulation of B4GALT1 cell surface expression, B4GALT1-mediated cell adhesion to laminin and embryoid body formation. This chain is Ubiquitin-conjugating enzyme E2 Q1 (Ube2q1), found in Mus musculus (Mouse).